The sequence spans 122 residues: Small ribosomal subunit protein uS12 (122 aa).

The disordered stretch occupies residues 1 to 45; sequence MPTTNQLVRKERKRQTKKTATPALQGSPQRRGVCTRVSTTTPKKP. Residues 18–28 are compositionally biased toward polar residues; sequence KTATPALQGSP. Asp-89 is subject to 3-methylthioaspartic acid.

Belongs to the universal ribosomal protein uS12 family. In terms of assembly, part of the 30S ribosomal subunit. Contacts proteins S8 and S17. May interact with IF1 in the 30S initiation complex.

With S4 and S5 plays an important role in translational accuracy. Its function is as follows. Interacts with and stabilizes bases of the 16S rRNA that are involved in tRNA selection in the A site and with the mRNA backbone. Located at the interface of the 30S and 50S subunits, it traverses the body of the 30S subunit contacting proteins on the other side and probably holding the rRNA structure together. The combined cluster of proteins S8, S12 and S17 appears to hold together the shoulder and platform of the 30S subunit. The polypeptide is Small ribosomal subunit protein uS12 (Rubrobacter xylanophilus (strain DSM 9941 / JCM 11954 / NBRC 16129 / PRD-1)).